Here is a 277-residue protein sequence, read N- to C-terminus: tRNA pseudouridine synthase A (277 aa).

The active-site Nucleophile is Asp-51. Tyr-109 lines the substrate pocket.

The protein belongs to the tRNA pseudouridine synthase TruA family. In terms of assembly, homodimer.

The catalysed reaction is uridine(38/39/40) in tRNA = pseudouridine(38/39/40) in tRNA. Its function is as follows. Formation of pseudouridine at positions 38, 39 and 40 in the anticodon stem and loop of transfer RNAs. The chain is tRNA pseudouridine synthase A from Nitrosomonas eutropha (strain DSM 101675 / C91 / Nm57).